Here is a 372-residue protein sequence, read N- to C-terminus: Ligninase H2 (372 aa).

The N-terminal stretch at 1-21 is a signal peptide; that stretch reads MAFKQLLAALSVALTLQVTQA. Positions 22–28 are excised as a propeptide; that stretch reads APNLDKR. Cystine bridges form between cysteine 31/cysteine 44, cysteine 43/cysteine 314, cysteine 63/cysteine 149, and cysteine 278/cysteine 344. Histidine 76 acts as the Proton acceptor in catalysis. Residues aspartate 77, glycine 95, aspartate 97, and serine 99 each coordinate Ca(2+). A heme b-binding site is contributed by histidine 205. Residues serine 206, aspartate 223, threonine 225, glutamine 228, and aspartate 230 each coordinate Ca(2+). Asparagine 286 carries N-linked (GlcNAc...) asparagine glycosylation.

Belongs to the peroxidase family. Ligninase subfamily. It depends on heme b as a cofactor. The cofactor is Ca(2+).

It catalyses the reaction 1-(3,4-dimethoxyphenyl)-2-(2-methoxyphenoxy)propane-1,3-diol + H2O2 = 3,4-dimethoxybenzaldehyde + guaiacol + glycolaldehyde + H2O. The enzyme catalyses 2 (3,4-dimethoxyphenyl)methanol + H2O2 = 2 (3,4-dimethoxyphenyl)methanol radical + 2 H2O. Its pathway is secondary metabolite metabolism; lignin degradation. Functionally, depolymerization of lignin. Catalyzes the C(alpha)-C(beta) cleavage of the propyl side chains of lignin. The sequence is that of Ligninase H2 (GLG4) from Phanerodontia chrysosporium (White-rot fungus).